The chain runs to 375 residues: Erythronate-4-phosphate dehydrogenase (375 aa).

2 residues coordinate substrate: S45 and T66. Residues D146 and T175 each contribute to the NAD(+) site. R208 is an active-site residue. Position 232 (D232) interacts with NAD(+). E237 is an active-site residue. Residue H254 is the Proton donor of the active site. G257 is a binding site for NAD(+). Substrate is bound at residue Y258.

The protein belongs to the D-isomer specific 2-hydroxyacid dehydrogenase family. PdxB subfamily. In terms of assembly, homodimer.

Its subcellular location is the cytoplasm. It carries out the reaction 4-phospho-D-erythronate + NAD(+) = (R)-3-hydroxy-2-oxo-4-phosphooxybutanoate + NADH + H(+). It functions in the pathway cofactor biosynthesis; pyridoxine 5'-phosphate biosynthesis; pyridoxine 5'-phosphate from D-erythrose 4-phosphate: step 2/5. In terms of biological role, catalyzes the oxidation of erythronate-4-phosphate to 3-hydroxy-2-oxo-4-phosphonooxybutanoate. This Yersinia enterocolitica serotype O:8 / biotype 1B (strain NCTC 13174 / 8081) protein is Erythronate-4-phosphate dehydrogenase.